A 974-amino-acid polypeptide reads, in one-letter code: Probable proton ATPase 1B (974 aa).

Positions 1–23 (MSSKKYELDAAAFEDKPESHSDA) are enriched in basic and acidic residues. The segment at 1–61 (MSSKKYELDA…ATDLLPPSKG (61 aa)) is disordered. Transmembrane regions (helical) follow at residues 93–112 (GLWG…EFAL), 118–137 (GAIL…YETI), 265–286 (VMLA…YLLA), and 295–321 (ALQF…TLAV). The active-site 4-aspartylphosphate intermediate is the D351. The next 6 membrane-spanning stretches (helical) occupy residues 631–651 (AAAD…AMLV), 662–684 (FLTY…CFSL), 698–712 (FFHL…ITLL), 738–761 (VVFV…LWIG), 813–840 (FFFY…AASF), and 869–887 (VWIY…KVLA). The tract at residues 952–974 (REDTHVLNESTSPVNAFSPKVKK) is disordered.

Belongs to the cation transport ATPase (P-type) (TC 3.A.3) family. Type IIIA subfamily.

Its subcellular location is the membrane. The catalysed reaction is ATP + H2O + H(+)(in) = ADP + phosphate + 2 H(+)(out). This chain is Probable proton ATPase 1B (H1B), found in Leishmania donovani.